The chain runs to 108 residues: ER membrane protein complex subunit 6 (108 aa).

The next 3 helical transmembrane spans lie at 21 to 41 (VVSF…GILG), 45 to 65 (YEGL…LFAL), and 86 to 106 (ILDG…LVYV).

This sequence belongs to the EMC6 family.

Its subcellular location is the endoplasmic reticulum membrane. In Schizosaccharomyces pombe (strain 972 / ATCC 24843) (Fission yeast), this protein is ER membrane protein complex subunit 6.